The following is a 196-amino-acid chain: Imidazoleglycerol-phosphate dehydratase (196 aa).

The protein belongs to the imidazoleglycerol-phosphate dehydratase family.

The protein resides in the cytoplasm. The enzyme catalyses D-erythro-1-(imidazol-4-yl)glycerol 3-phosphate = 3-(imidazol-4-yl)-2-oxopropyl phosphate + H2O. The protein operates within amino-acid biosynthesis; L-histidine biosynthesis; L-histidine from 5-phospho-alpha-D-ribose 1-diphosphate: step 6/9. This is Imidazoleglycerol-phosphate dehydratase from Clostridium botulinum (strain Langeland / NCTC 10281 / Type F).